The following is a 162-amino-acid chain: Phosphopantetheine adenylyltransferase (162 aa).

Serine 11 contributes to the substrate binding site. ATP-binding positions include serine 11–phenylalanine 12 and histidine 19. Positions 43, 75, and 89 each coordinate substrate. ATP-binding positions include glycine 90 to arginine 92, glutamate 100, and tyrosine 125 to serine 131.

This sequence belongs to the bacterial CoaD family. Homohexamer. Mg(2+) is required as a cofactor.

The protein localises to the cytoplasm. It catalyses the reaction (R)-4'-phosphopantetheine + ATP + H(+) = 3'-dephospho-CoA + diphosphate. It functions in the pathway cofactor biosynthesis; coenzyme A biosynthesis; CoA from (R)-pantothenate: step 4/5. In terms of biological role, reversibly transfers an adenylyl group from ATP to 4'-phosphopantetheine, yielding dephospho-CoA (dPCoA) and pyrophosphate. The chain is Phosphopantetheine adenylyltransferase from Finegoldia magna (strain ATCC 29328 / DSM 20472 / WAL 2508) (Peptostreptococcus magnus).